A 627-amino-acid chain; its full sequence is Membrane protein insertase YidC (627 aa).

6 helical membrane-spanning segments follow: residues 3–23 (KNTV…SWLN), 376–396 (WGLI…PLAY), 450–470 (LPML…PTTI), 502–522 (FYGN…ILYI), 534–554 (EGMA…LFFF), and 558–578 (ASGL…QYMS).

It belongs to the OXA1/ALB3/YidC family. Type 1 subfamily. Interacts with the Sec translocase complex via SecD. Specifically interacts with transmembrane segments of nascent integral membrane proteins during membrane integration.

The protein resides in the cell inner membrane. Functionally, required for the insertion and/or proper folding and/or complex formation of integral membrane proteins into the membrane. Involved in integration of membrane proteins that insert both dependently and independently of the Sec translocase complex, as well as at least some lipoproteins. Aids folding of multispanning membrane proteins. This Porphyromonas gingivalis (strain ATCC BAA-308 / W83) protein is Membrane protein insertase YidC.